The chain runs to 214 residues: MALSEAAVKVQAALLERGLETPMLPSVYSSEERKDKIEHHMKEILTLMSLDLSDDSLADTPRRIAKMYVDEIFSGLDYENFPKITVIDNKMGFDEMVRVQDISLTSTCEHHLVTIDGTATIAYLPRKKIIGLSKINRIVRFFAQRPQVQERLTQQVLVALQTLLETKDVAVKMDAVHYCVKSRGVMDSTSSTTTTALGGIFKSNPATRAEFLHQ.

3 residues coordinate Zn(2+): Cys108, His111, and Cys179.

The protein belongs to the GTP cyclohydrolase I family. As to quaternary structure, toroid-shaped homodecamer, composed of two pentamers of five dimers.

The catalysed reaction is GTP + H2O = 7,8-dihydroneopterin 3'-triphosphate + formate + H(+). The protein operates within cofactor biosynthesis; 7,8-dihydroneopterin triphosphate biosynthesis; 7,8-dihydroneopterin triphosphate from GTP: step 1/1. The protein is GTP cyclohydrolase 1 of Shewanella putrefaciens (strain CN-32 / ATCC BAA-453).